A 272-amino-acid chain; its full sequence is NADH-dependent L-xylulose reductase (272 aa).

Residues Leu24 and Asp78 each contribute to the NADP(+) site. Catalysis depends on Ser160, which acts as the Proton donor. Residues Tyr175, Lys179, and Ile208 each contribute to the NADP(+) site. Tyr175 (proton acceptor) is an active-site residue. The Lowers pKa of active site Tyr role is filled by Lys179.

This sequence belongs to the short-chain dehydrogenases/reductases (SDR) family.

It catalyses the reaction xylitol + NAD(+) = L-xylulose + NADH + H(+). The enzyme catalyses D-arabinitol + NAD(+) = D-ribulose + NADH + H(+). In terms of biological role, NADH-dependent L-xylulose reductase; part of the yeast pathway for L-arabinose catabolism. Reversibly converts L-xylulose to xylitol and D-ribulose to D-arabinitol. It has a much lower activity with D-xylulose. Sugar alcohols can serve as a substrate when the hydroxyl group of C-2 is in the L- and the hydroxyl group of the C-3 is in the D-configuration. Also seems to be specific for sugar alcohols that have not more than 5 carbons since no activity is observed with dulcitol (galactitol), which has the hydroxyl group of C-2 in L- and of C-3 in D-configuration, but is a six-carbon sugar alcohol. This Ambrosiozyma monospora (Yeast) protein is NADH-dependent L-xylulose reductase.